The primary structure comprises 1172 residues: Serine/threonine-protein kinase Nek10 (1172 aa).

One copy of the ARM repeat lies at 209–251 (GAHKTLVNLLGARDTNVLLGSLLALASLAESQECREKISELNI). A coiled-coil region spans residues 481-514 (YEELVSKLNLLVEDELKQIAENIESINQNKAPLK). Positions 519–712 (YAILDHLGSG…SEPYGEKADV (194 aa)) constitute a Protein kinase domain. Residues 525–533 (LGSGAFGCV) and lysine 548 each bind ATP. The active-site Proton acceptor is the aspartate 655. 2 disordered regions span residues 855-875 (SELSESADLPPEGFQASYGKD) and 898-954 (TYSE…GSRP). The span at 919–945 (PLKESTFNILKRSFSASGGERQSQTRD) shows a compositional bias: polar residues.

It belongs to the protein kinase superfamily. NEK Ser/Thr protein kinase family. NIMA subfamily. In terms of assembly, interacts with RAF1 and MAP2K1; the interaction is direct with RAF1 and required for ERK1/2-signaling pathway activation in response to UV irradiation. It depends on Mg(2+) as a cofactor. Expressed in the lung.

It catalyses the reaction L-seryl-[protein] + ATP = O-phospho-L-seryl-[protein] + ADP + H(+). It carries out the reaction L-threonyl-[protein] + ATP = O-phospho-L-threonyl-[protein] + ADP + H(+). Plays a role in the cellular response to UV irradiation. Mediates G2/M cell cycle arrest, MEK autoactivation and ERK1/2-signaling pathway activation in response to UV irradiation. In ciliated cells of airways, it is involved in the regulation of mucociliary transport. The polypeptide is Serine/threonine-protein kinase Nek10 (Homo sapiens (Human)).